The primary structure comprises 615 residues: Nuclear receptor subfamily 1 group D member 1 (615 aa).

The span at 1 to 12 (MTTLDSNNNTGG) shows a compositional bias: polar residues. The tract at residues 1 to 70 (MTTLDSNNNT…TQDPARSFGT (70 aa)) is required for phosphorylation by CSNK1E and cytoplasmic localization. Residues 1–120 (MTTLDSNNNT…SSRVSPSKGT (120 aa)) are disordered. The modulating stretch occupies residues 1–129 (MTTLDSNNNT…TSNITKLNGM (129 aa)). The span at 14–34 (ITYIGSSGSSPSRTSPESLYS) shows a compositional bias: low complexity. Residues 35–48 (DSSNGSFQSLTQGC) are compositionally biased toward polar residues. Positions 49-285 (PTYFPPSPTG…PPRSPSPEPT (237 aa)) are crucial for activation of GJA1. Phosphoserine; by GSK3-beta is present on residues Ser55 and Ser59. The span at 72 to 103 (PPSLSDDSSPSSASSSSSSSSSSFYNGSPPGS) shows a compositional bias: low complexity. Residues 130 to 206 (VLLCKVCGDV…VGMSRDAVRF (77 aa)) constitute a DNA-binding region (nuclear receptor). 2 consecutive NR C4-type zinc fingers follow at residues 133-153 (CKVCGDVASGFHYGVHACEGC) and 170-194 (CLKNENCSIVRINRNRCQQCRFKKC). N6-acetyllysine; by KAT5 occurs at positions 192 and 193. 3 disordered regions span residues 235–287 (LCPL…PTVE), 312–337 (PGNFNANHASGSPPATTPQCWESQGC), and 357–385 (NGLRQGPSSYPPTWPSGPAHHSCHQPNSN). Positions 253 to 262 (PSPPPAPAPT) are enriched in pro residues. A Phosphothreonine; by CDK1 modification is found at Thr275. The NR LBD domain maps to 285-615 (TVEDVISQVA…KLLSFRVDAQ (331 aa)). The residue at position 401 (Lys401) is an N6-acetyllysine. Residue Cys419 participates in heme binding. Lys592 is subject to N6-acetyllysine. His603 contacts heme.

The protein belongs to the nuclear hormone receptor family. NR1 subfamily. In terms of assembly, binds DNA as a monomer or a homodimer. Interacts with C1D, NR2E3, SP1 and ZNHIT1. Interacts with OPHN1 (via C-terminus). Interacts with PER2; the interaction associates PER2 to BMAL1 promoter region. Interacts with CRY1. Interacts with CCAR2. Interacts with SIAH2. Interacts with FBXW7 and CDK1. Interacts with HUWE1. Interacts with NR0B2. Interacts with NFIL3. Interacts (via domain NR LBD) with HSP90AA1 and HSP90AB1. In terms of processing, ubiquitinated, leading to its proteasomal degradation. Ubiquitinated by the SCF(FBXW7) complex when phosphorylated by CDK1 leading to its proteasomal degradation. Ubiquitinated by SIAH2; leading to its proteasomal degradation. Rapidly ubiquitinated in response to inflammatory triggers and sumoylation is a prerequisite to its ubiquitination. Post-translationally, sumoylated by UBE2I, desumoylated by SENP1, and sumoylation is a prerequisite to its ubiquitination. Phosphorylated by CSNK1E; phosphorylation enhances its cytoplasmic localization. In terms of processing, undergoes lysosome-mediated degradation in a time-dependent manner in the liver.

It is found in the nucleus. The protein localises to the cytoplasm. The protein resides in the cell projection. It localises to the dendrite. Its subcellular location is the dendritic spine. In terms of biological role, transcriptional repressor which coordinates circadian rhythm and metabolic pathways in a heme-dependent manner. Integral component of the complex transcription machinery that governs circadian rhythmicity and forms a critical negative limb of the circadian clock by directly repressing the expression of core clock components BMAL1, CLOCK and CRY1. Also regulates genes involved in metabolic functions, including lipid and bile acid metabolism, adipogenesis, gluconeogenesis and the macrophage inflammatory response. Acts as a receptor for heme which stimulates its interaction with the NCOR1/HDAC3 corepressor complex, enhancing transcriptional repression. Recognizes two classes of DNA response elements within the promoter of its target genes and can bind to DNA as either monomers or homodimers, depending on the nature of the response element. Binds as a monomer to a response element composed of the consensus half-site motif 5'-[A/G]GGTCA-3' preceded by an A/T-rich 5' sequence (RevRE), or as a homodimer to a direct repeat of the core motif spaced by two nucleotides (RevDR-2). Acts as a potent competitive repressor of ROR alpha (RORA) function and regulates the levels of its ligand heme by repressing the expression of PPARGC1A, a potent inducer of heme synthesis. Regulates lipid metabolism by repressing the expression of APOC3 and by influencing the activity of sterol response element binding proteins (SREBPs); represses INSIG2 which interferes with the proteolytic activation of SREBPs which in turn govern the rhythmic expression of enzymes with key functions in sterol and fatty acid synthesis. Regulates gluconeogenesis via repression of G6PC1 and PEPCK and adipocyte differentiation via repression of PPARG. Regulates glucagon release in pancreatic alpha-cells via the AMPK-NAMPT-SIRT1 pathway and the proliferation, glucose-induced insulin secretion and expression of key lipogenic genes in pancreatic-beta cells. Positively regulates bile acid synthesis by increasing hepatic expression of CYP7A1 via repression of NR0B2 and NFIL3 which are negative regulators of CYP7A1. Modulates skeletal muscle oxidative capacity by regulating mitochondrial biogenesis and autophagy; controls mitochondrial biogenesis and respiration by interfering with the STK11-PRKAA1/2-SIRT1-PPARGC1A signaling pathway. Represses the expression of SERPINE1/PAI1, an important modulator of cardiovascular disease and the expression of inflammatory cytokines and chemokines in macrophages. Represses gene expression at a distance in macrophages by inhibiting the transcription of enhancer-derived RNAs (eRNAs). Plays a role in the circadian regulation of body temperature and negatively regulates thermogenic transcriptional programs in brown adipose tissue (BAT); imposes a circadian oscillation in BAT activity, increasing body temperature when awake and depressing thermogenesis during sleep. In concert with NR2E3, regulates transcriptional networks critical for photoreceptor development and function. In addition to its activity as a repressor, can also act as a transcriptional activator. In the ovarian granulosa cells acts as a transcriptional activator of STAR which plays a role in steroid biosynthesis. In collaboration with SP1, activates GJA1 transcription in a heme-independent manner. Represses the transcription of CYP2B10, CYP4A10 and CYP4A14. Represses the transcription of CES2. Represses and regulates the circadian expression of TSHB in a NCOR1-dependent manner. Negatively regulates the protein stability of NR3C1 and influences the time-dependent subcellular distribution of NR3C1, thereby affecting its transcriptional regulatory activity. Plays a critical role in the circadian control of neutrophilic inflammation in the lung; under resting, non-stress conditions, acts as a rhythmic repressor to limit inflammatory activity whereas in the presence of inflammatory triggers undergoes ubiquitin-mediated degradation thereby relieving inhibition of the inflammatory response. Plays a key role in the circadian regulation of microglial activation and neuroinflammation; suppresses microglial activation through the NF-kappaB pathway in the central nervous system. Plays a role in the regulation of the diurnal rhythms of lipid and protein metabolism in the skeletal muscle via transcriptional repression of genes controlling lipid and amino acid metabolism in the muscle. In Rattus norvegicus (Rat), this protein is Nuclear receptor subfamily 1 group D member 1 (Nr1d1).